Consider the following 590-residue polypeptide: MGFHLITQLKGMSVVLVLLPTLLLVMLTGAQRACPKNCRCDGKIVYCESHAFADIPENISGGSQGLSLRFNSIQKLKSNQFAGLNQLIWLYLDHNYISSVDEDAFQGIRRLKELILSSNKITYLHNKTFHPVPNLRNLDLSYNKLQTLQSEQFKGLRKLIILHLRSNSLKTVPIRVFQDCRNLDFLDLGYNRLRSLSRNAFAGLLKLKELHLEHNQFSKINFAHFPRLFNLRSIYLQWNRIRSISQGLTWTWSSLHNLDLSGNDIQGIEPGTFKCLPNLQKLNLDSNKLTNISQETVNAWISLISITLSGNMWECSRSICPLFYWLKNFKGNKESTMICAGPKHIQGEKVSDAVETYNICSEVQVVNTERSHLVPQTPQKPLIIPRPTIFKPDVTQSTFETPSPSPGFQIPGAEQEYEHVSFHKIIAGSVALFLSVAMILLVIYVSWKRYPASMKQLQQHSLMKRRRKKARESERQMNSPLQEYYVDYKPTNSETMDISVNGSGPCTYTISGSRECEMPHHMKPLPYYSYDQPVIGYCQAHQPLHVTKGYETVSPEQDESPGLELGRDHSFIATIARSAAPAIYLERIAN.

The signal sequence occupies residues 1–30 (MGFHLITQLKGMSVVLVLLPTLLLVMLTGA). The 31-residue stretch at 31–61 (QRACPKNCRCDGKIVYCESHAFADIPENISG) folds into the LRRNT domain. At 31 to 424 (QRACPKNCRC…QEYEHVSFHK (394 aa)) the chain is on the extracellular side. Asn58 carries an N-linked (GlcNAc...) asparagine glycan. 10 LRR repeats span residues 62–83 (GSQGLSLRFNSIQKLKSNQFAG), 86–107 (QLIWLYLDHNYISSVDEDAFQG), 110–131 (RLKELILSSNKITYLHNKTFHP), 134–155 (NLRNLDLSYNKLQTLQSEQFKG), 158–179 (KLIILHLRSNSLKTVPIRVFQD), 182–203 (NLDFLDLGYNRLRSLSRNAFAG), 206–226 (KLKELHLEHNQFSKINFAHFP), 230–251 (NLRSIYLQWNRIRSISQGLTWT), 254–275 (SLHNLDLSGNDIQGIEPGTFKC), and 278–299 (NLQKLNLDSNKLTNISQETVNA). The N-linked (GlcNAc...) asparagine glycan is linked to Asn126. N-linked (GlcNAc...) asparagine glycosylation is present at Asn291. An LRRCT domain is found at 311–362 (NMWECSRSICPLFYWLKNFKGNKESTMICAGPKHIQGEKVSDAVETYNICSE). The chain crosses the membrane as a helical span at residues 425-445 (IIAGSVALFLSVAMILLVIYV). Residues 446 to 590 (SWKRYPASMK…PAIYLERIAN (145 aa)) are Cytoplasmic-facing.

The protein belongs to the LRRTM family. In terms of assembly, peripherally associated with AMPAR complex. AMPAR complex consists of an inner core made of 4 pore-forming GluA/GRIA proteins (GRIA1, GRIA2, GRIA3 and GRIA4) and 4 major auxiliary subunits arranged in a twofold symmetry. One of the two pairs of distinct binding sites is occupied either by CNIH2, CNIH3 or CACNG2, CACNG3. The other harbors CACNG2, CACNG3, CACNG4, CACNG8 or GSG1L. This inner core of AMPAR complex is complemented by outer core constituents binding directly to the GluA/GRIA proteins at sites distinct from the interaction sites of the inner core constituents. Outer core constituents include at least PRRT1, PRRT2, CKAMP44/SHISA9, FRRS1L and NRN1. The proteins of the inner and outer core serve as a platform for other, more peripherally associated AMPAR constituents, including LRRTM4. Alone or in combination, these auxiliary subunits control the gating and pharmacology of the AMPAR complex and profoundly impact their biogenesis and protein processing. Expressed in neuronal tissues.

The protein resides in the cell membrane. It is found in the postsynaptic cell membrane. May play a role in the development and maintenance of the vertebrate nervous system. Exhibits strong synaptogenic activity, restricted to excitatory presynaptic differentiation. This is Leucine-rich repeat transmembrane neuronal protein 4 (LRRTM4) from Homo sapiens (Human).